The sequence spans 1552 residues: ABC multidrug transporter lscH (1552 aa).

The next 2 helical transmembrane spans lie at 32–52 and 68–88; these read ETILSILPSVLVIVVAPIPII and WFKKISSICFITLSAALVGLW. Asn91 is a glycosylation site (N-linked (GlcNAc...) asparagine). Transmembrane regions (helical) follow at residues 100 to 120, 158 to 178, 280 to 300, 311 to 331, 413 to 433, 457 to 477, 500 to 520, and 528 to 548; these read STPSAVLTFVLSLVYVLLSTI, HSAIPPVFASSLALRVVMLLL, LFQIGFTYAQPFLITAAIELA, NGYGLIGAYILVYSGIAVSVG, AACVMSVGFAIVVMVGTVFLA, ALASIKWLKISGLTDVAFSVI, ILSICTPILGPLLTFAVFAGI, and LTIAKVFTAFSIIVLLNSPLA. The 280-residue stretch at 280–559 folds into the ABC transmembrane type-1 1 domain; that stretch reads LFQIGFTYAQ…IVQALPQISG (280 aa). Residues 573–655 are disordered; the sequence is AEERHDPRST…PDANGDSRDA (83 aa). The span at 581–602 shows a compositional bias: polar residues; that stretch reads STTTGTSPESNNGSQQTLSDKQ. N-linked (GlcNAc...) asparagine glycosylation is present at Asn592. An ABC transporter 1 domain is found at 639-884; the sequence is GHLADTTPDA…AELGWADRDL (246 aa). 676–683 serves as a coordination point for ATP; sequence GPVGCGKS. Asn719 and Asn834 each carry an N-linked (GlcNAc...) asparagine glycan. Over residues 887–912 the composition is skewed to basic and acidic residues; it reads QQEKPGKDELNHEHGEYSESAPEKLR. Residues 887-917 form a disordered region; that stretch reads QQEKPGKDELNHEHGEYSESAPEKLRRSQTN. 2 helical membrane passes run 957–977 and 1005–1025; these read GWLTITIFVIAICVYAFCDSF and AVLGVGAVAACLIGTWQLFII. The 279-residue stretch at 963–1241 folds into the ABC transmembrane type-1 2 domain; it reads IFVIAICVYA…ATITSWVTLE (279 aa). N-linked (GlcNAc...) asparagine glycosylation is present at Asn1028. 4 consecutive transmembrane segments (helical) span residues 1076–1096, 1100–1120, 1184–1204, and 1210–1230; these read AALGVVMALSFGIAQFILVCV, YMAALLPFLLAVLYAIQHFYL, WITFAVNMVIMMLAVILIVLT, and AIGPGYVGIALSNILAFSATM. The 244-residue stretch at 1295 to 1538 folds into the ABC transporter 2 domain; the sequence is IELDNVTASY…PTSIFKELYL (244 aa). Asn1299 and Asn1313 each carry an N-linked (GlcNAc...) asparagine glycan. 1328–1335 lines the ATP pocket; sequence GRTGSGKS.

This sequence belongs to the ABC transporter superfamily. ABCC family. Conjugate transporter (TC 3.A.1.208) subfamily.

The protein resides in the cell membrane. ABC multidrug transporter; part of the gene cluster that mediates the biosynthesis of the lipopeptide antibiotics leucinostatins that show extensive biological activities, including antimalarial, antiviral, antibacterial, antifungal, and antitumor activities, as well as phytotoxic. May be involved in the efflux of leucinostatins. This Purpureocillium lilacinum (Paecilomyces lilacinus) protein is ABC multidrug transporter lscH.